Here is a 91-residue protein sequence, read N- to C-terminus: CRISPR-associated endoribonuclease Cas2 2 (91 aa).

Residue D10 participates in Mg(2+) binding.

Belongs to the CRISPR-associated endoribonuclease Cas2 protein family. In terms of assembly, homodimer, forms a heterotetramer with a Cas1 homodimer. Mg(2+) is required as a cofactor.

In terms of biological role, CRISPR (clustered regularly interspaced short palindromic repeat), is an adaptive immune system that provides protection against mobile genetic elements (viruses, transposable elements and conjugative plasmids). CRISPR clusters contain sequences complementary to antecedent mobile elements and target invading nucleic acids. CRISPR clusters are transcribed and processed into CRISPR RNA (crRNA). Functions as a ssRNA-specific endoribonuclease. Involved in the integration of spacer DNA into the CRISPR cassette. In Thermodesulfovibrio yellowstonii (strain ATCC 51303 / DSM 11347 / YP87), this protein is CRISPR-associated endoribonuclease Cas2 2.